The primary structure comprises 474 residues: MTKKLHIKTWGCQMNEYDSSKMADLLDATHGYQLTDVAEEADVLLLNTCSIREKAQEKVFHQLGRWRLLKEKNPDLIIGVGGCVASQEGEHIRQRAHYVDIIFGPQTSHRLPEMINSVRGDRSPVVDISFPEIEKFDRLPEPRAEGPTAFVSIMEGCNKYCTYCVVPYTRGEEVSRPSDDILFEIAQLAAQGVREVNLLGQNVNAWRGENYDGTTGTFADLLRLVAAIDGIDRIRFTTSHPIEFTDDIIEVYRDTPELVSFLHLPVQSGSDRVLNLMGRTHTALEYKAIIRKLRAARPDIQISSDFIVGFPGETTDDFEKTMKLIADVNFDMSYSFIFSARPGTPAADMVDDVPEEEKKQRLYILQERINQQAMAWSRRMLGTTQRILVEGTSRKNIMELSGRTENNRVVNFEGTPEMIGKFVDVEITDVYPNSLRGKVVRTEDEMGLRVAETPESVIARTRKENELGVGFYQP.

The 118-residue stretch at 3 to 120 (KKLHIKTWGC…LPEMINSVRG (118 aa)) folds into the MTTase N-terminal domain. Residues Cys-12, Cys-49, Cys-83, Cys-157, Cys-161, and Cys-164 each coordinate [4Fe-4S] cluster. The 233-residue stretch at 143–375 (RAEGPTAFVS…QERINQQAMA (233 aa)) folds into the Radical SAM core domain. Residues 378–441 (RRMLGTTQRI…PNSLRGKVVR (64 aa)) enclose the TRAM domain.

It belongs to the methylthiotransferase family. MiaB subfamily. In terms of assembly, monomer. It depends on [4Fe-4S] cluster as a cofactor.

The protein localises to the cytoplasm. The enzyme catalyses N(6)-dimethylallyladenosine(37) in tRNA + (sulfur carrier)-SH + AH2 + 2 S-adenosyl-L-methionine = 2-methylsulfanyl-N(6)-dimethylallyladenosine(37) in tRNA + (sulfur carrier)-H + 5'-deoxyadenosine + L-methionine + A + S-adenosyl-L-homocysteine + 2 H(+). Catalyzes the methylthiolation of N6-(dimethylallyl)adenosine (i(6)A), leading to the formation of 2-methylthio-N6-(dimethylallyl)adenosine (ms(2)i(6)A) at position 37 in tRNAs that read codons beginning with uridine. The sequence is that of tRNA-2-methylthio-N(6)-dimethylallyladenosine synthase from Salmonella paratyphi A (strain ATCC 9150 / SARB42).